An 89-amino-acid chain; its full sequence is Probable Fe(2+)-trafficking protein (89 aa).

This sequence belongs to the Fe(2+)-trafficking protein family.

Could be a mediator in iron transactions between iron acquisition and iron-requiring processes, such as synthesis and/or repair of Fe-S clusters in biosynthetic enzymes. This Stenotrophomonas maltophilia (strain R551-3) protein is Probable Fe(2+)-trafficking protein.